The sequence spans 207 residues: Protein lin-7 homolog B (207 aa).

The Kinase interacting site motif lies at Met-1 to Asp-13. Residues Leu-10–Gly-65 enclose the L27 domain. A PDZ domain is found at Val-93–Pro-175. The segment at Lys-187–Gly-207 is disordered. A compositionally biased stretch (polar residues) spans His-198 to Gly-207.

It belongs to the lin-7 family. In terms of assembly, forms a complex with CASK and CASKIN1. Component of the brain-specific heterotrimeric complex (LIN-10-LIN-2-LIN-7 complex) composed of at least APBA1, CASK, and LIN7, which associates with the motor protein KIF17 to transport vesicles along microtubules. Forms a heterotrimeric complex composed of MMP5, LIN7B and PATJ; the N-terminal L27 domain of PALS1 interacts with the L27 domain of PATJ and the C-terminal L27 domain of PALS1 interacts with the L27 domain of LIN7B. Forms a heterotrimeric complex with DLG1 and CASK via their L27 domains. Interacts with DLG4 and GRIN2B as well as CDH1 and CTNNB1, the channels KCNJ12/Kir2.2, KCNJ4/Kir2.3 and probably KCNJ2/Kir2.1 and SLC6A12/BGT-1 via its PDZ domain. The association of LIN7A with cadherin and beta-catenin is calcium-dependent, occurs at synaptic junctions and requires the actin cytoskeleton. Interacts with EGFR, ERBB2, ERBB3 and ERBB4 with both PDZ and KID domains. Associates with KIF17 via APBA1. Interacts with ASIC3. Interacts with TOPK. Interacts with RTKN. Interacts with APBA1. Interacts with MPP7. Interacts with DLG2. Interacts with DLG3. In terms of tissue distribution, expressed in the kidney; predominantly in the vasa recta.

The protein localises to the cell membrane. It is found in the basolateral cell membrane. The protein resides in the cell junction. It localises to the postsynaptic density membrane. Its subcellular location is the tight junction. Functionally, plays a role in establishing and maintaining the asymmetric distribution of channels and receptors at the plasma membrane of polarized cells. Forms membrane-associated multiprotein complexes that may regulate delivery and recycling of proteins to the correct membrane domains. The tripartite complex composed of LIN7 (LIN7A, LIN7B or LIN7C), CASK and APBA1 associates with the motor protein KIF17 to transport vesicles containing N-methyl-D-aspartate (NMDA) receptor subunit NR2B along microtubules. This complex may have the potential to couple synaptic vesicle exocytosis to cell adhesion in brain. Ensures the proper localization of GRIN2B (subunit 2B of the NMDA receptor) to neuronal postsynaptic density and may function in localizing synaptic vesicles at synapses where it is recruited by beta-catenin and cadherin. Required to localize Kir2 channels, GABA transporter (SLC6A12) and EGFR/ERBB1, ERBB2, ERBB3 and ERBB4 to the basolateral membrane of epithelial cells. May increase the amplitude of ASIC3 acid-evoked currents by stabilizing the channel at the cell surface. The chain is Protein lin-7 homolog B (Lin7b) from Mus musculus (Mouse).